The primary structure comprises 185 residues: Putative manganese efflux pump MntP (185 aa).

A run of 6 helical transmembrane segments spans residues 3 to 23 (PFAV…VSVG), 41 to 61 (AVFG…GVAA), 70 to 90 (HWLA…AAVW), 101 to 121 (SFTV…AVGV), 123 to 143 (LAFL…ATFL), and 165 to 185 (AVAG…HLTA).

The protein belongs to the MntP (TC 9.B.29) family.

The protein resides in the cell inner membrane. Functionally, probably functions as a manganese efflux pump. This is Putative manganese efflux pump MntP from Bradyrhizobium sp. (strain BTAi1 / ATCC BAA-1182).